The chain runs to 62 residues: Metallothionein-like protein 3A (62 aa).

The protein belongs to the metallothionein superfamily. Type 15 family.

Metallothioneins have a high content of cysteine residues that bind various heavy metals. In Oryza sativa subsp. indica (Rice), this protein is Metallothionein-like protein 3A (MT3A).